Here is a 189-residue protein sequence, read N- to C-terminus: Probable nicotinate-nucleotide adenylyltransferase (189 aa).

Belongs to the NadD family.

The catalysed reaction is nicotinate beta-D-ribonucleotide + ATP + H(+) = deamido-NAD(+) + diphosphate. The protein operates within cofactor biosynthesis; NAD(+) biosynthesis; deamido-NAD(+) from nicotinate D-ribonucleotide: step 1/1. Catalyzes the reversible adenylation of nicotinate mononucleotide (NaMN) to nicotinic acid adenine dinucleotide (NaAD). The sequence is that of Probable nicotinate-nucleotide adenylyltransferase from Staphylococcus aureus (strain USA300 / TCH1516).